Here is a 174-residue protein sequence, read N- to C-terminus: Large ribosomal subunit protein uL18 (174 aa).

This sequence belongs to the universal ribosomal protein uL18 family. Part of the 50S ribosomal subunit. Contacts the 5S and 23S rRNAs.

Functionally, this is one of the proteins that bind and probably mediate the attachment of the 5S RNA into the large ribosomal subunit, where it forms part of the central protuberance. The polypeptide is Large ribosomal subunit protein uL18 (Methanoregula boonei (strain DSM 21154 / JCM 14090 / 6A8)).